The sequence spans 298 residues: Probable porphobilinogen deaminase (298 aa).

An S-(dipyrrolylmethanemethyl)cysteine modification is found at Cys-241.

This sequence belongs to the HMBS family. The cofactor is dipyrromethane.

The enzyme catalyses 4 porphobilinogen + H2O = hydroxymethylbilane + 4 NH4(+). The protein operates within porphyrin-containing compound metabolism; protoporphyrin-IX biosynthesis; coproporphyrinogen-III from 5-aminolevulinate: step 2/4. Its function is as follows. Tetrapolymerization of the monopyrrole PBG into the hydroxymethylbilane pre-uroporphyrinogen in several discrete steps. The polypeptide is Probable porphobilinogen deaminase (Methanopyrus kandleri (strain AV19 / DSM 6324 / JCM 9639 / NBRC 100938)).